The primary structure comprises 289 residues: ATP synthase mitochondrial F1 complex assembly factor 2 (289 aa).

The transit peptide at 1–40 directs the protein to the mitochondrion; the sequence is MWRRCLRLRDVGRRLLNLPRSGLTASEGLGPKLPTPIRAY. Residue Lys-133 is modified to N6-succinyllysine.

It belongs to the ATP12 family. Interacts with ATP5F1B; involved in the assembly of the F1 component of the mitochondrial ATP synthase (ATPase). Interacts with FMC1.

It localises to the mitochondrion inner membrane. Functionally, plays a role in the assembly of the F1 component of the mitochondrial ATP synthase (ATPase). This is ATP synthase mitochondrial F1 complex assembly factor 2 (ATPAF2) from Bos taurus (Bovine).